Here is a 440-residue protein sequence, read N- to C-terminus: Ferredoxin--NADP reductase (440 aa).

Positions 17 to 75 constitute a CpcD-like domain; it reads SRVFVYEVVGMRQNEETDQTNYPIRKSGSVFIRVPYNRMNQEMQRITRLGGKIVSIQTV. The interval 98 to 142 is disordered; the sequence is AKSEGNGKATPVKTDSGAKGFAKPPAEEQLKKKDNKGNTMTQAKA. A compositionally biased stretch (basic and acidic residues) spans 122–133; the sequence is PAEEQLKKKDNK. In terms of domain architecture, FAD-binding FR-type spans 155 to 279; sequence NAPFIGKVIS…TGPVGKEMLL (125 aa). FAD-binding positions include 214 to 217, 235 to 237, Y241, 253 to 255, and T294; these read RLYS, CVR, and VCS. NADP(+)-binding residues include S217 and R237. NADP(+) contacts are provided by residues T294, 330–331, 360–361, 370–374, 399–400, and E438; these read VP, SR, RMYIQ, and GL.

The protein belongs to the ferredoxin--NADP reductase type 1 family. FAD is required as a cofactor.

The protein localises to the cellular thylakoid membrane. It carries out the reaction 2 reduced [2Fe-2S]-[ferredoxin] + NADP(+) + H(+) = 2 oxidized [2Fe-2S]-[ferredoxin] + NADPH. This chain is Ferredoxin--NADP reductase (petH), found in Nostoc sp. (strain PCC 7120 / SAG 25.82 / UTEX 2576).